The following is a 397-amino-acid chain: LIM/homeobox protein Lhx9 (397 aa).

2 consecutive LIM zinc-binding domains span residues 69 to 130 (ALCA…RFSV) and 131 to 193 (QRCA…LLQG). Disordered regions lie at residues 248 to 272 (ENEA…RMRT), 330 to 365 (ENGG…LTDL), and 378 to 397 (SNMD…TNLF). A DNA-binding region (homeobox) is located at residues 267 to 326 (TKRMRTSFKHHQLRTMKSYFAINHNPDAKDLKQLAQKTGLTKRVLQVWFQNARAKFRRNL). A compositionally biased stretch (low complexity) spans 353–365 (LTPPGTATTLTDL). Polar residues predominate over residues 387 to 397 (SPSQTTLTNLF).

In terms of assembly, interacts with LDB1 and LDB2. In terms of tissue distribution, expressed in the dorsal thalamus and inner nuclei of the cerebellum.

The protein resides in the nucleus. In terms of biological role, involved in gonadal development. The sequence is that of LIM/homeobox protein Lhx9 (Lhx9) from Mus musculus (Mouse).